The sequence spans 337 residues: Ferredoxin--NADP reductase (337 aa).

Residues Asp-35, Gln-43, Tyr-48, Ala-88, Phe-122, Asp-289, and Thr-330 each coordinate FAD.

Belongs to the ferredoxin--NADP reductase type 2 family. In terms of assembly, homodimer. FAD serves as cofactor.

It catalyses the reaction 2 reduced [2Fe-2S]-[ferredoxin] + NADP(+) + H(+) = 2 oxidized [2Fe-2S]-[ferredoxin] + NADPH. This Ehrlichia ruminantium (strain Welgevonden) protein is Ferredoxin--NADP reductase.